We begin with the raw amino-acid sequence, 391 residues long: Probable acridone synthase 4 (391 aa).

The active site involves Cys164.

This sequence belongs to the thiolase-like superfamily. Chalcone/stilbene synthases family.

It catalyses the reaction N-methylanthraniloyl-CoA + 3 malonyl-CoA + 3 H(+) = 1,3-dihydroxy-N-methylacridone + 3 CO2 + 4 CoA + H2O. This chain is Probable acridone synthase 4 (ACS4), found in Ruta graveolens (Common rue).